The chain runs to 68 residues: Gallinacin-10 (68 aa).

A signal peptide spans 1–19 (MKILCLLFAVLLFLFQAAP). Residues 20-25 (GSADPL) constitute a propeptide that is removed on maturation. 3 cysteine pairs are disulfide-bonded: C32–C61, C39–C54, and C44–C62.

Belongs to the beta-defensin family. Strong expression in the testis, liver, gall bladder and kidney. Also expressed in the ovary and male and female reproductive tracts. Expressed in the ovarian stroma and the theca and granulosa layers of the ovarian follicle.

It localises to the secreted. Its subcellular location is the cytoplasmic granule. Its function is as follows. Has bactericidal activity. The protein is Gallinacin-10 (GAL10) of Gallus gallus (Chicken).